We begin with the raw amino-acid sequence, 310 residues long: Oxygen-dependent coproporphyrinogen-III oxidase (310 aa).

Ser97 is a substrate binding site. The a divalent metal cation site is built by His101 and His111. Catalysis depends on His111, which acts as the Proton donor. Residue 113-115 (NFR) coordinates substrate. His150 and His180 together coordinate a divalent metal cation. Residues 245-280 (YVEFNLLYDRGTRFGLEFGGRTESILMSLPPRVVWR) form an important for dimerization region. 263–265 (GGR) is a binding site for substrate.

This sequence belongs to the aerobic coproporphyrinogen-III oxidase family. Homodimer. The cofactor is a divalent metal cation.

The protein localises to the cytoplasm. The enzyme catalyses coproporphyrinogen III + O2 + 2 H(+) = protoporphyrinogen IX + 2 CO2 + 2 H2O. It functions in the pathway porphyrin-containing compound metabolism; protoporphyrin-IX biosynthesis; protoporphyrinogen-IX from coproporphyrinogen-III (O2 route): step 1/1. Its function is as follows. Involved in the heme biosynthesis. Catalyzes the aerobic oxidative decarboxylation of propionate groups of rings A and B of coproporphyrinogen-III to yield the vinyl groups in protoporphyrinogen-IX. The protein is Oxygen-dependent coproporphyrinogen-III oxidase of Coxiella burnetii (strain Dugway 5J108-111).